Reading from the N-terminus, the 188-residue chain is Pyridoxal 5'-phosphate synthase subunit PdxT (188 aa).

47-49 lines the L-glutamine pocket; it reads GES. Cysteine 79 serves as the catalytic Nucleophile. Residues arginine 105 and 134 to 135 contribute to the L-glutamine site; that span reads IR. Active-site charge relay system residues include histidine 170 and glutamate 172.

This sequence belongs to the glutaminase PdxT/SNO family. As to quaternary structure, in the presence of PdxS, forms a dodecamer of heterodimers. Only shows activity in the heterodimer.

The enzyme catalyses aldehydo-D-ribose 5-phosphate + D-glyceraldehyde 3-phosphate + L-glutamine = pyridoxal 5'-phosphate + L-glutamate + phosphate + 3 H2O + H(+). The catalysed reaction is L-glutamine + H2O = L-glutamate + NH4(+). It functions in the pathway cofactor biosynthesis; pyridoxal 5'-phosphate biosynthesis. Its function is as follows. Catalyzes the hydrolysis of glutamine to glutamate and ammonia as part of the biosynthesis of pyridoxal 5'-phosphate. The resulting ammonia molecule is channeled to the active site of PdxS. This Listeria monocytogenes serotype 4b (strain CLIP80459) protein is Pyridoxal 5'-phosphate synthase subunit PdxT.